Consider the following 460-residue polypeptide: Putative RNA-guided DNA endonuclease MT2953 (460 aa).

Catalysis depends on residues Asp224 and Glu313. 4 residues coordinate Zn(2+): Cys372, Cys375, Cys389, and Cys392. Asp399 is an active-site residue. Positions 415–460 (VVGPVGAAVKRGADRKTGPGPAGGREARKATGHPAGEQPRDGVQVK) are disordered.

In the N-terminal section; belongs to the transposase 2 family. The protein in the C-terminal section; belongs to the transposase 35 family.

An RNA-guided dsDNA endonuclease. When guided by an RNA derived from the right-end element of its insertion sequence element (IS), cleaves DNA downstream of the transposon-associated motif (TAM). Cleaves supercoiled and linear DNA in a staggered manner 15-21 bases from the TAM yielding 5'-overhangs. Binds reRNA, an approximately 150 nucleotide base sRNA derived from the 3' end of its own gene, the right end (RE) of the insertion sequence (IS) plus sequence downstream of the IS. In Mycobacterium tuberculosis (strain CDC 1551 / Oshkosh), this protein is Putative RNA-guided DNA endonuclease MT2953.